The primary structure comprises 115 residues: MNFVLALTVNTLLALLLMTITFWLPQLYPYMEKSDPYECGFDPAYPARIPFSMKFFLVAITFLLFDLEIALLLPLPWALQTTNLPLMTTSSLMLIIILALGLTYEWSQKGLDWAE.

The next 3 helical transmembrane spans lie at 3-23 (FVLALTVNTLLALLLMTITFW), 55-75 (FFLVAITFLLFDLEIALLLPL), and 84-104 (LPLMTTSSLMLIIILALGLTY).

This sequence belongs to the complex I subunit 3 family. As to quaternary structure, core subunit of respiratory chain NADH dehydrogenase (Complex I) which is composed of 45 different subunits. Interacts with TMEM186. Interacts with TMEM242.

It localises to the mitochondrion inner membrane. The catalysed reaction is a ubiquinone + NADH + 5 H(+)(in) = a ubiquinol + NAD(+) + 4 H(+)(out). Its function is as follows. Core subunit of the mitochondrial membrane respiratory chain NADH dehydrogenase (Complex I) which catalyzes electron transfer from NADH through the respiratory chain, using ubiquinone as an electron acceptor. Essential for the catalytic activity of complex I. This chain is NADH-ubiquinone oxidoreductase chain 3, found in Pongo abelii (Sumatran orangutan).